The following is a 122-amino-acid chain: Photosystem II extrinsic protein U (122 aa).

An N-terminal signal peptide occupies residues 1–26 (MKTIVRLFAILMVLISSVGFVGSAVA).

Belongs to the PsbU family. PSII is composed of 1 copy each of membrane proteins PsbA, PsbB, PsbC, PsbD, PsbE, PsbF, PsbH, PsbI, PsbJ, PsbK, PsbL, PsbM, PsbT, PsbX, PsbY, PsbZ, Psb30/Ycf12, peripheral proteins PsbO, CyanoQ (PsbQ), PsbU, PsbV and a large number of cofactors. It forms dimeric complexes.

It is found in the cellular thylakoid membrane. In terms of biological role, one of the extrinsic, lumenal subunits of photosystem II (PSII). PSII is a light-driven water plastoquinone oxidoreductase, using light energy to abstract electrons from H(2)O, generating a proton gradient subsequently used for ATP formation. The extrinsic proteins stabilize the structure of photosystem II oxygen-evolving complex (OEC), the ion environment of oxygen evolution and protect the OEC against heat-induced inactivation. The protein is Photosystem II extrinsic protein U of Crocosphaera subtropica (strain ATCC 51142 / BH68) (Cyanothece sp. (strain ATCC 51142)).